Reading from the N-terminus, the 429-residue chain is ETS domain-containing protein Elk-1 (429 aa).

Residues 5–86 constitute a DNA-binding region (ETS); the sequence is VTLWQFLLQL…SGQKFVYKFV (82 aa). Disordered regions lie at residues 119 to 146, 165 to 204, and 227 to 253; these read HAGP…GLAR, SLQP…SPNP, and APNQ…KVEG. Residues 169 to 178 show a composition bias toward pro residues; the sequence is QPQPPIPPRP. Residues Lys231, Lys250, and Lys255 each participate in a glycyl lysine isopeptide (Lys-Gly) (interchain with G-Cter in SUMO) cross-link. Residues 302–312 show a composition bias toward polar residues; sequence STSTTEITQPQ. The disordered stretch occupies residues 302–354; the sequence is STSTTEITQPQKGRKPRDLELPLSPSLLGGQGPERTPGSGTSSGLQAPGPALT. The residue at position 325 (Ser325) is a Phosphoserine; by MAPK1. Phosphothreonine; by MAPK1 is present on residues Thr337, Thr354, Thr364, and Thr369. Residues 350–400 are sufficient for interaction with MAD2L2; it reads GPALTPSLLPTHTLTPVLLTPSSLPPSIHFWSTLSPIAPRSPAKLSFQFPS. A glycan (O-linked (GlcNAc) threonine) is linked at Thr382. The residue at position 384 (Ser384) is a Phosphoserine; by MAPK1 and MAPK8. Ser390 bears the Phosphoserine; by MAPK1 mark. Thr418 is modified (phosphothreonine; by MAPK1). Ser423 is modified (phosphoserine; by MAPK1).

The protein belongs to the ETS family. In terms of assembly, interacts in its sumoylated form with PIAS2/PIASX which enhances its transcriptional activator activity. Interacts with MAD2L2; the interaction is direct and promotes phosphorylation by the kinases MAPK8 and/or MAPK9. Interacts with POU1F1. Sumoylation represses transcriptional activator activity as it results in recruitment of HDAC2 to target gene promoters which leads to decreased histone acetylation and reduced transactivator activity. It also regulates nuclear retention. Post-translationally, on mitogenic stimulation, phosphorylated on C-terminal serine and threonine residues by MAPK1 but also MAPK8 and/or MAPK9. Phosphorylation leads to loss of sumoylation and restores transcriptional activator activity. Phosphorylated and activated by CaMK4, MAPK11, MAPK12 and MAPK14. Upon bFGF stimulus, phosphorylated by PAK1. Phosphorylated by PRP4K at Thr-418; phosphorylation activation ELK1 transcriptional activity. In terms of tissue distribution, predominantly expressed in the brain, and to a lesser extent in the heart, liver and muscle.

Its subcellular location is the nucleus. Transcription factor that binds to purine-rich DNA sequences. Forms a ternary complex with SRF and the ETS and SRF motifs of the serum response element (SRE) on the promoter region of immediate early genes such as FOS and IER2. Induces target gene transcription upon JNK and MAPK-signaling pathways stimulation. This is ETS domain-containing protein Elk-1 from Mus musculus (Mouse).